The sequence spans 30 residues: Varv peptide B (30 aa).

A cross-link (cyclopeptide (Gly-Asn)) is located at residues Gly1–Asn30. Disulfide bonds link Cys5–Cys19, Cys9–Cys21, and Cys14–Cys27.

This is a cyclic peptide.

Probably participates in a plant defense mechanism. The polypeptide is Varv peptide B (Viola arvensis (European field pansy)).